We begin with the raw amino-acid sequence, 484 residues long: Endoglucanase 3 (484 aa).

Residues 1 to 21 (MASPFFFVFLLSALSLENTYA) form the signal peptide. Asp77 (nucleophile) is an active-site residue. An N-linked (GlcNAc...) asparagine glycan is attached at Asn370. Catalysis depends on residues His402, Asp453, and Glu462.

Belongs to the glycosyl hydrolase 9 (cellulase E) family. In terms of tissue distribution, specifically expressed in root cap cells.

The protein resides in the secreted. The enzyme catalyses Endohydrolysis of (1-&gt;4)-beta-D-glucosidic linkages in cellulose, lichenin and cereal beta-D-glucans.. Its function is as follows. May be involved in the sloughing (cell-cell separation) of the root cap cells from root tip. This is Endoglucanase 3 (CEL5) from Arabidopsis thaliana (Mouse-ear cress).